Reading from the N-terminus, the 202-residue chain is Adapter protein MecA 2 (202 aa).

It belongs to the MecA family. As to quaternary structure, homodimer.

In terms of biological role, enables the recognition and targeting of unfolded and aggregated proteins to the ClpC protease or to other proteins involved in proteolysis. Acts negatively in the development of competence by binding ComK and recruiting it to the ClpCP protease. When overexpressed, inhibits sporulation. Also involved in Spx degradation by ClpC. The polypeptide is Adapter protein MecA 2 (mecA2) (Bacillus cereus (strain ATCC 14579 / DSM 31 / CCUG 7414 / JCM 2152 / NBRC 15305 / NCIMB 9373 / NCTC 2599 / NRRL B-3711)).